The following is a 240-amino-acid chain: Zein-alpha 19C1 (240 aa).

Positions 1 to 21 are cleaved as a signal peptide; sequence MATKIFSLLMLLALSACVANA.

This sequence belongs to the zein family.

Its function is as follows. Zeins are major seed storage proteins. This chain is Zein-alpha 19C1, found in Zea mays (Maize).